The sequence spans 542 residues: MSILALVEDRPTPKEVYNWRIYLLAAVASFTSCMIGYDSAFIGTTLALSSFREEFGFNTMSKTAVNLVSANIVSCYQAGAFFGAFLAYPVGHFWGRKWGLLFSGAIFTLGAGLMLGADGDRGLGLLYGGRVLAGLGVGAGSNITPIYISEMAPPSIRGRLVGVYELGWQIGGLVGFWINYGVSETLAPSHKQWIIPFAVQLIPSGLLLIGAVFLKESPRWLFSRGRREDAIKNLCWIRQLPADHIYMIEEIGAVDQALEEQRATIGLGFWKPFKAAGTNKKVMYRLFLGSMLFFWQNGSGINAINYYSPTVFKSIGLQGANTSMFSTGIFGVVKTVVTFVWLLYLIDRLGRRLLLLIGAAGASVCLFIVGAYIKIADPASNPTQEMTGGGIAAMFFFYLYTVFYTPSWNGTPWVMNSEMFEPNMRSLAQACAAASNWFWNFLISRFTPQMFAKMEYGVWFFFASLMVLSIVFVFFLLPETKGIPLESMDALFESRPIWRAHETVLARLREDEERFRHDIEESGYSKTGDQQVEHLSEDLPKV.

At 1 to 22 (MSILALVEDRPTPKEVYNWRIY) the chain is on the cytoplasmic side. The helical transmembrane segment at 23-43 (LLAAVASFTSCMIGYDSAFIG) threads the bilayer. The Extracellular segment spans residues 44 to 66 (TTLALSSFREEFGFNTMSKTAVN). Residues 67 to 87 (LVSANIVSCYQAGAFFGAFLA) form a helical membrane-spanning segment. The Cytoplasmic segment spans residues 88 to 97 (YPVGHFWGRK). The chain crosses the membrane as a helical span at residues 98–118 (WGLLFSGAIFTLGAGLMLGAD). At 119–130 (GDRGLGLLYGGR) the chain is on the extracellular side. A helical transmembrane segment spans residues 131–151 (VLAGLGVGAGSNITPIYISEM). Topologically, residues 152-159 (APPSIRGR) are cytoplasmic. A helical transmembrane segment spans residues 160-180 (LVGVYELGWQIGGLVGFWINY). The Extracellular segment spans residues 181-193 (GVSETLAPSHKQW). The helical transmembrane segment at 194 to 214 (IIPFAVQLIPSGLLLIGAVFL) threads the bilayer. Over 215 to 285 (KESPRWLFSR…AGTNKKVMYR (71 aa)) the chain is Cytoplasmic. The chain crosses the membrane as a helical span at residues 286–306 (LFLGSMLFFWQNGSGINAINY). Residues 307-325 (YSPTVFKSIGLQGANTSMF) lie on the Extracellular side of the membrane. Residues 326–346 (STGIFGVVKTVVTFVWLLYLI) form a helical membrane-spanning segment. Over 347-352 (DRLGRR) the chain is Cytoplasmic. A helical transmembrane segment spans residues 353–373 (LLLLIGAAGASVCLFIVGAYI). Topologically, residues 374–387 (KIADPASNPTQEMT) are extracellular. The chain crosses the membrane as a helical span at residues 388–408 (GGGIAAMFFFYLYTVFYTPSW). The Cytoplasmic portion of the chain corresponds to 409-456 (NGTPWVMNSEMFEPNMRSLAQACAAASNWFWNFLISRFTPQMFAKMEY). The helical transmembrane segment at 457-477 (GVWFFFASLMVLSIVFVFFLL) threads the bilayer. At 478–542 (PETKGIPLES…EHLSEDLPKV (65 aa)) the chain is on the extracellular side. The segment at 519–542 (IEESGYSKTGDQQVEHLSEDLPKV) is disordered. Positions 531–542 (QVEHLSEDLPKV) are enriched in basic and acidic residues.

Belongs to the major facilitator superfamily. Sugar transporter (TC 2.A.1.1) family. Interacts with creB. In terms of processing, ubiquitinated. Deubiquitinated by creB, probably to control its activity or amount.

It localises to the cell membrane. Integral membrane transporter that imports quinic acid to be catabolized as a carbon source. The sequence is that of Probable quinate permease (qutD) from Neosartorya fischeri (strain ATCC 1020 / DSM 3700 / CBS 544.65 / FGSC A1164 / JCM 1740 / NRRL 181 / WB 181) (Aspergillus fischerianus).